We begin with the raw amino-acid sequence, 495 residues long: Probable lysine-specific demethylase 4A (495 aa).

In terms of domain architecture, JmjN spans 18–60 (IMTFRPSYEEFQNFSAYIEYIESRGAHLAGLAKIQPPAEWVPR). A 2-oxoglutarate-binding site is contributed by Tyr139. A JmjC domain is found at 149-315 (DEDLDVWNIG…YGKRASICRC (167 aa)). Residues His195 and Glu197 each contribute to the Fe cation site. 2-oxoglutarate contacts are provided by Asn205 and Lys213. Residues Cys241 and His247 each contribute to the Zn(2+) site. 2-oxoglutarate is bound at residue Lys248. Residue His283 coordinates Fe cation. Zn(2+) is bound by residues Cys313 and Cys315. A Phosphoserine modification is found at Ser409.

It belongs to the JHDM3 histone demethylase family. Fe(2+) is required as a cofactor.

The protein localises to the nucleus. It catalyses the reaction N(6),N(6),N(6)-trimethyl-L-lysyl(9)-[histone H3] + 2 2-oxoglutarate + 2 O2 = N(6)-methyl-L-lysyl(9)-[histone H3] + 2 formaldehyde + 2 succinate + 2 CO2. The enzyme catalyses N(6),N(6),N(6)-trimethyl-L-lysyl(36)-[histone H3] + 2 2-oxoglutarate + 2 O2 = N(6)-methyl-L-lysyl(36)-[histone H3] + 2 formaldehyde + 2 succinate + 2 CO2. Probable histone demethylase that specifically demethylates 'Lys-9' and 'Lys-36' residues of histone H3, thereby playing a central role in histone code. Demethylation of Lys residue generates formaldehyde and succinate. In Drosophila melanogaster (Fruit fly), this protein is Probable lysine-specific demethylase 4A (Kdm4A).